We begin with the raw amino-acid sequence, 295 residues long: Phosphatidylserine decarboxylase proenzyme (295 aa).

Residues Asp-113, His-169, and Ser-256 each act as charge relay system; for autoendoproteolytic cleavage activity in the active site. Ser-256 serves as the catalytic Schiff-base intermediate with substrate; via pyruvic acid; for decarboxylase activity. A Pyruvic acid (Ser); by autocatalysis modification is found at Ser-256.

Belongs to the phosphatidylserine decarboxylase family. PSD-B subfamily. Prokaryotic type II sub-subfamily. As to quaternary structure, heterodimer of a large membrane-associated beta subunit and a small pyruvoyl-containing alpha subunit. Pyruvate is required as a cofactor. Is synthesized initially as an inactive proenzyme. Formation of the active enzyme involves a self-maturation process in which the active site pyruvoyl group is generated from an internal serine residue via an autocatalytic post-translational modification. Two non-identical subunits are generated from the proenzyme in this reaction, and the pyruvate is formed at the N-terminus of the alpha chain, which is derived from the carboxyl end of the proenzyme. The autoendoproteolytic cleavage occurs by a canonical serine protease mechanism, in which the side chain hydroxyl group of the serine supplies its oxygen atom to form the C-terminus of the beta chain, while the remainder of the serine residue undergoes an oxidative deamination to produce ammonia and the pyruvoyl prosthetic group on the alpha chain. During this reaction, the Ser that is part of the protease active site of the proenzyme becomes the pyruvoyl prosthetic group, which constitutes an essential element of the active site of the mature decarboxylase.

Its subcellular location is the cell membrane. It catalyses the reaction a 1,2-diacyl-sn-glycero-3-phospho-L-serine + H(+) = a 1,2-diacyl-sn-glycero-3-phosphoethanolamine + CO2. It participates in phospholipid metabolism; phosphatidylethanolamine biosynthesis; phosphatidylethanolamine from CDP-diacylglycerol: step 2/2. Functionally, catalyzes the formation of phosphatidylethanolamine (PtdEtn) from phosphatidylserine (PtdSer). The chain is Phosphatidylserine decarboxylase proenzyme from Clostridium botulinum (strain Langeland / NCTC 10281 / Type F).